The primary structure comprises 470 residues: Cannabinoid receptor type 1B (470 aa).

Topologically, residues 1 to 113 (MKLALHRIAG…CFMILTPAQQ (113 aa)) are extracellular. 2 N-linked (GlcNAc...) asparagine glycosylation sites follow: Asn78 and Asn86. Residues 114–139 (LVIVILAITLGTFTVLENFVVLCVIL) form a helical membrane-spanning segment. At 140–151 (HSHTLRSRPSYH) the chain is on the cytoplasmic side. The chain crosses the membrane as a helical span at residues 152–172 (FIGSLAVADLIGSIIFVYSFL). Residues 173-184 (DFHVLHRKDSPS) are Extracellular-facing. A helical membrane pass occupies residues 185–209 (IFLFKLAGVIASFTASVGSLFLTAI). Topologically, residues 210-229 (DRYVSIHRPMAYKRIITKTK) are cytoplasmic. The chain crosses the membrane as a helical span at residues 230–252 (AVIAFSVMWAISIEFSLLPLLGW). Topologically, residues 253–270 (NCKRLHSVCSDIFPLIDE) are extracellular. Residues 271–296 (KYLMFWIGMTTVLLLFIIYAYMFILW) form a helical membrane-spanning segment. Over 297-341 (KSHHHAVRMLSRSSQRSIIVYTSEGTKVQTVRPEQARMDLRLAKT) the chain is Cytoplasmic. Residues 342-362 (LVLILVALIICWGPLLAIMVY) form a helical membrane-spanning segment. Topologically, residues 363-374 (DLFGRVNDFIKT) are extracellular. A helical transmembrane segment spans residues 375-396 (VFAFCSMLCLLNSTINPVIYAM). Residues 397 to 470 (RSKDLRRAFV…VTASSPAEAV (74 aa)) are Cytoplasmic-facing. Cys412 carries S-palmitoyl cysteine lipidation. Residues 418-434 (SLDSSAESDWNSRSVRS) show a composition bias toward polar residues. A disordered region spans residues 418–450 (SLDSSAESDWNSRSVRSTGGRAGKDRSVGGKPQ).

It belongs to the G-protein coupled receptor 1 family. Palmitoylation at Cys-412 is important for recruitment at both plasma membrane and lipid rafts and association with G protein alpha subunits.

The protein resides in the cell membrane. The protein localises to the mitochondrion outer membrane. It localises to the cell projection. Its subcellular location is the axon. It is found in the presynapse. G-protein coupled receptor for cannabinoids. Mediates many cannabinoid-induced effects in the central nervous system (CNS), as well as in peripheral tissues. Regulates cellular respiration and energy production in response to cannabinoids. Signaling typically involves reduction in cyclic AMP. The chain is Cannabinoid receptor type 1B (cnr1b) from Takifugu rubripes (Japanese pufferfish).